The chain runs to 195 residues: dCTP deaminase, dUMP-forming (195 aa).

Residues 105-110, Asp-123, 131-133, Gln-152, Tyr-166, Lys-173, and Gln-177 each bind dCTP; these read RSSLGR and TLE. The active-site Proton donor/acceptor is the Glu-133. Residues 161-195 form a disordered region; that stretch reads PADRPYGDERGSKYQDQDGPQASRIRGDREFGGTQ. The segment covering 165 to 176 has biased composition (basic and acidic residues); the sequence is PYGDERGSKYQD. The span at 185 to 195 shows a compositional bias: basic and acidic residues; sequence IRGDREFGGTQ.

This sequence belongs to the dCTP deaminase family. Homotrimer.

It carries out the reaction dCTP + 2 H2O = dUMP + NH4(+) + diphosphate. Its pathway is pyrimidine metabolism; dUMP biosynthesis; dUMP from dCTP: step 1/1. Bifunctional enzyme that catalyzes both the deamination of dCTP to dUTP and the hydrolysis of dUTP to dUMP without releasing the toxic dUTP intermediate. This Halobacterium salinarum (strain ATCC 700922 / JCM 11081 / NRC-1) (Halobacterium halobium) protein is dCTP deaminase, dUMP-forming.